Reading from the N-terminus, the 417-residue chain is Serine hydroxymethyltransferase (417 aa).

(6S)-5,6,7,8-tetrahydrofolate-binding positions include Leu-112 and 116–118; that span reads GHL. N6-(pyridoxal phosphate)lysine is present on Lys-221. A (6S)-5,6,7,8-tetrahydrofolate-binding site is contributed by Glu-247.

The protein belongs to the SHMT family. Homodimer. Pyridoxal 5'-phosphate serves as cofactor.

The protein localises to the cytoplasm. The enzyme catalyses (6R)-5,10-methylene-5,6,7,8-tetrahydrofolate + glycine + H2O = (6S)-5,6,7,8-tetrahydrofolate + L-serine. It participates in one-carbon metabolism; tetrahydrofolate interconversion. Its pathway is amino-acid biosynthesis; glycine biosynthesis; glycine from L-serine: step 1/1. In terms of biological role, catalyzes the reversible interconversion of serine and glycine with tetrahydrofolate (THF) serving as the one-carbon carrier. This reaction serves as the major source of one-carbon groups required for the biosynthesis of purines, thymidylate, methionine, and other important biomolecules. Also exhibits THF-independent aldolase activity toward beta-hydroxyamino acids, producing glycine and aldehydes, via a retro-aldol mechanism. The chain is Serine hydroxymethyltransferase from Borrelia duttonii (strain Ly).